The primary structure comprises 303 residues: Probable cell division protein WhiA (303 aa).

The segment at residues 272–303 is a DNA-binding region (H-T-H motif); the sequence is SIQQIADSLAVPLTKSGVNHRLRKINKIAEDL.

Belongs to the WhiA family.

In terms of biological role, involved in cell division and chromosome segregation. This chain is Probable cell division protein WhiA, found in Streptococcus mutans serotype c (strain ATCC 700610 / UA159).